An 82-amino-acid chain; its full sequence is uncharacterized protein (82 aa).

Functionally, this protein may be involved in virus assembly. This is an uncharacterized protein from Sulfolobus spindle-shape virus 1 (SSV1).